A 37-amino-acid polypeptide reads, in one-letter code: Large ribosomal subunit protein bL36 (37 aa).

This sequence belongs to the bacterial ribosomal protein bL36 family.

This Nocardia farcinica (strain IFM 10152) protein is Large ribosomal subunit protein bL36.